The following is a 271-amino-acid chain: Large ribosomal subunit protein eL8 (271 aa).

Belongs to the eukaryotic ribosomal protein eL8 family.

The chain is Large ribosomal subunit protein eL8 (RpL7A) from Drosophila melanogaster (Fruit fly).